The chain runs to 113 residues: Kita-kyushu lung cancer antigen 1 (113 aa).

Topologically, residues methionine 1–phenylalanine 3 are cytoplasmic. Residues tyrosine 4 to tyrosine 21 traverse the membrane as a helical; Signal-anchor for type II membrane protein segment. The Extracellular segment spans residues arginine 22–threonine 113. Asparagine 83 carries N-linked (GlcNAc...) asparagine glycosylation.

In terms of tissue distribution, specifically expressed in testis. Expressed by cancer cell lines.

It localises to the cell membrane. The sequence is that of Kita-kyushu lung cancer antigen 1 (CT83) from Homo sapiens (Human).